Here is a 269-residue protein sequence, read N- to C-terminus: uncharacterized protein (269 aa).

Helical transmembrane passes span 65-85, 156-176, 182-202, 206-226, and 242-262; these read FSLFLTIVMIINLLFGSLFVM, VTSVLLAACRVCLNLMLISMV, YTRILLCIISYGMMIFVWLGF, MMSFMLATWLFAYNIVLNDFW, and TLSAIGGLLLLIHTGPGEFSF. The Di-lysine motif signature appears at 266 to 269; the sequence is KKKW.

It belongs to the SURF4 family.

It is found in the membrane. This is an uncharacterized protein from Caenorhabditis elegans.